The following is a 329-amino-acid chain: GTP 3',8-cyclase (329 aa).

A Radical SAM core domain is found at 8-234 (AFARKFYYLR…QLRQRSDGPA (227 aa)). Position 17 (Arg17) interacts with GTP. Cys24 and Cys28 together coordinate [4Fe-4S] cluster. Tyr30 is an S-adenosyl-L-methionine binding site. Cys31 contributes to the [4Fe-4S] cluster binding site. GTP is bound at residue Arg68. Gly72 provides a ligand contact to S-adenosyl-L-methionine. Position 99 (Thr99) interacts with GTP. Position 123 (Ser123) interacts with S-adenosyl-L-methionine. Residue Lys160 participates in GTP binding. Met194 is an S-adenosyl-L-methionine binding site. 2 residues coordinate [4Fe-4S] cluster: Cys257 and Cys260. Residue 262–264 (RLR) coordinates GTP. Cys274 serves as a coordination point for [4Fe-4S] cluster.

Belongs to the radical SAM superfamily. MoaA family. In terms of assembly, monomer and homodimer. [4Fe-4S] cluster is required as a cofactor.

It catalyses the reaction GTP + AH2 + S-adenosyl-L-methionine = (8S)-3',8-cyclo-7,8-dihydroguanosine 5'-triphosphate + 5'-deoxyadenosine + L-methionine + A + H(+). It participates in cofactor biosynthesis; molybdopterin biosynthesis. Functionally, catalyzes the cyclization of GTP to (8S)-3',8-cyclo-7,8-dihydroguanosine 5'-triphosphate. The sequence is that of GTP 3',8-cyclase from Salmonella paratyphi B (strain ATCC BAA-1250 / SPB7).